Reading from the N-terminus, the 123-residue chain is Fluoride-specific ion channel FluC (123 aa).

4 helical membrane passes run 1–21 (MQWL…GWLA), 32–52 (LGTL…LVWF), 66–86 (FVIT…AEVF), and 94–114 (LLAA…ATAL). G73 and T76 together coordinate Na(+).

It belongs to the fluoride channel Fluc/FEX (TC 1.A.43) family.

It is found in the cell inner membrane. It carries out the reaction fluoride(in) = fluoride(out). Its activity is regulated as follows. Na(+) is not transported, but it plays an essential structural role and its presence is essential for fluoride channel function. In terms of biological role, fluoride-specific ion channel. Important for reducing fluoride concentration in the cell, thus reducing its toxicity. This chain is Fluoride-specific ion channel FluC, found in Psychrobacter arcticus (strain DSM 17307 / VKM B-2377 / 273-4).